A 1116-amino-acid polypeptide reads, in one-letter code: ELKS/Rab6-interacting/CAST family member 1 (1116 aa).

Residues 1 to 54 are disordered; the sequence is MYGSARSVGKVEPSSQSPGRSPRLPRSPRLGHRRTNSTGGSSGSSVGGGSGKTL. An N6-acetyllysine modification is found at Lys10. Low complexity predominate over residues 13–28; sequence PSSQSPGRSPRLPRSP. Residues Ser17, Ser21, and Ser37 each carry the phosphoserine modification. Thr38 is modified (phosphothreonine). The segment covering 40–51 has biased composition (gly residues); it reads GSSGSSVGGGSG. Phosphoserine is present on residues Ser55, Ser75, and Ser94. A coiled-coil region spans residues 144 to 988; that stretch reads RQARDNTIMD…RMKLMADNYE (845 aa). Positions 590–602 are enriched in basic and acidic residues; the sequence is KEKQMSSLKERVK. 2 disordered regions span residues 590–609 and 814–836; these read KEKQ…ADTT and ARRR…RKKD. At Ser1005 the chain carries Phosphoserine. The residue at position 1046 (Thr1046) is a Phosphothreonine. In terms of domain architecture, FIP-RBD spans 1046–1108; sequence TPPASYNLDD…DHCPDILEQV (63 aa). A coiled-coil region spans residues 1060–1100; it reads WENELQKMTRGQLQDELEKGERDNAELQEFANAILQQIADH.

Part of a complex with CHUK, IKBKB and IKBKG. Interacts with CHUK, IKBKB and IKBKG. The interaction with IKBKG is independent of CHUK and IKBKB. Interacts with NFKBIA. Isoform 4 interacts with PPFIA1, and through its C-terminus with the PDZ domains of RIMS1 and RIMS2. Interacts with ERC2/CAST1. Interacts with the GTB-bound forms of RAB6A isoform 1 and isoform 2 and with RAB6B. The interaction was strongest with RAB6B, followed by RAB6A isoform 2 and weakest with RAB6A isoform 1. Interacts with SDCCAG8. Part of a cortical microtubule stabilization complex (CMSC) composed of KANK1, PPFIA1, PPFIBP1, ERC1/ELKS, PHLDB2/LL5beta, CLASPs, KIF21A and possibly additional interactors; within CMSCs KANK1 and PHLDB2/LL5beta appear to be the core components for targeting of microtubule-binding proteins KIF21A and CLASPs, whereas PPFIA1, PPFIBP1 and ERC1/ELKS serve as scaffolds for protein clustering. In terms of tissue distribution, widely expressed. Isoform 2 and isoform 4 are abundantly expressed in brain. Isoform 1 and isoform 3 are predominantly expressed in testis and thyroid, and isoform 1 predominates in other tissues tested.

It localises to the cytoplasm. Its subcellular location is the cytoskeleton. The protein localises to the microtubule organizing center. The protein resides in the centrosome. It is found in the membrane. It localises to the golgi apparatus membrane. Its subcellular location is the presynaptic cell membrane. The protein localises to the cell projection. The protein resides in the podosome. In terms of biological role, regulatory subunit of the IKK complex. Probably recruits IkappaBalpha/NFKBIA to the complex. May be involved in the organization of the cytomatrix at the nerve terminals active zone (CAZ) which regulates neurotransmitter release. May be involved in vesicle trafficking at the CAZ. May be involved in Rab-6 regulated endosomes to Golgi transport. The chain is ELKS/Rab6-interacting/CAST family member 1 (ERC1) from Homo sapiens (Human).